Consider the following 935-residue polypeptide: MAFNQRKRRRPVGIADFDEANDEAYESVGFHDYADYFSRKQRKLQNQNAALYKSIDEDSKSDLFHGLAIAINGYTKPSYTELRQMIVSNGGTFIQYVDGKTSISYLVCSFLTPSKARQWKHQKVVKPEWIVDCIKQKKILPWINYRTFQASSAQATLSFVASKPSQPEGNLEDIQTSSQEEEHDNEKDKTKESKAKGFLDDLSGLSASSLHNYQLLKNPNVRNSTTQNQDFLENFFSSSRLHHLSTWKADFKNEIQAMTTASEPVRPIMKDKSKKSRFLLHVDFDCFFASVSTRFSHELRLKPVAVAHGIKNSEIASCNYEARKFGIKNGMYVGTAKNLCPSLRVVDYDFGAYESVSREFYTILVNTLHDYIKVISIDEALLDITSSVSSFQDCFEIAESIRSQVREKTNCEVSVGIGPNVLLARLALRKAKPHNVYSLSIENVFDVLSPLSVQDLPGVGSSQAQKLFNLYGVRTIGQLQRIEKFNLQETFGVNYGLHLYNISRGIDTDIINNETPRRSISVDVNWGVRFVFQEDGIDFLKRLLHELLSRMGKCQVLLHQIQLRILKRADGAPFSPPKYLGAGEVTSFTKSSTFTSATNSFDLIWKKVTSMYKTINVDPGDVRGIGLQALKIIKDNSKIRKDYRSIQSITSRNKVSLKGASVDISSKDKEIISQKKQLSPKLIPSTPYDLPSSSQISSSALAQLPPSMQSDIQQQLRLQKRSITEYPSQLDPLFMVELPTPIRNEVNDNHEIAMNKRLSLKSHADNKIDERGKKKIRQENAFDKLLQISKKSKTINKPNVDYLTLKELPKDLQKQILKESNLQKSDLISEVKLEKPHIVTFQHVQSLEDLRGLLTKWYSKASKGPNIHDVNYFANYVCRVIREEKNLGKAQMMLKWLYQLNRKECNKPWEKAIDKIIETVQGECLQRNIPPLMIF.

A BRCT domain is found at 59-147 (SKSDLFHGLA…KILPWINYRT (89 aa)). Over residues 162-178 (SKPSQPEGNLEDIQTSS) the composition is skewed to polar residues. The disordered stretch occupies residues 162-193 (SKPSQPEGNLEDIQTSSQEEEHDNEKDKTKES). Positions 184-193 (DNEKDKTKES) are enriched in basic and acidic residues. The segment at 235-245 (FFSSSRLHHLS) is interaction with target DNA. DCTP is bound by residues Arg240 and 283-287 (DFDCF). The UmuC domain occupies 279-460 (LLHVDFDCFF…LSVQDLPGVG (182 aa)). Residues Asp283 and Phe284 each contribute to the Mg(2+) site. Residues 310-312 (IKN) are interaction with target DNA. Residues 317-323 (SCNYEAR), Asn329, and Asp378 contribute to the dCTP site. Positions 378 and 379 each coordinate Mg(2+). Interaction with target DNA stretches follow at residues 460–463 (GSSQ) and 517–525 (RRSISVDVN).

Belongs to the DNA polymerase type-Y family. The cofactor is Mg(2+).

Its subcellular location is the nucleus. The protein resides in the nucleolus. It is found in the mitochondrion. It localises to the cytoplasm. The protein localises to the cytoskeleton. Its subcellular location is the spindle. Functionally, deoxycytidyl transferase involved in DNA repair. Transfers a dCMP residue from dCTP to the 3'-end of a DNA primer in a template-dependent reaction. May assist in the first step in the bypass of abasic lesions by the insertion of a nucleotide opposite the lesion. Required for normal induction of mutations by physical and chemical agents. Involved in mitochondrial DNA mutagenesis. The protein is DNA repair protein rev1 of Schizosaccharomyces pombe (strain 972 / ATCC 24843) (Fission yeast).